A 592-amino-acid polypeptide reads, in one-letter code: uncharacterized protein (592 aa).

This is an uncharacterized protein from Acanthamoeba polyphaga mimivirus (APMV).